A 493-amino-acid chain; its full sequence is Cysteine--tRNA ligase (493 aa).

Residue C29 coordinates Zn(2+). A 'HIGH' region motif is present at residues 31–41 (VTVYDLCHLGH). Positions 154–179 (KLSGRDPDDQQQGASGRTADGEESRK) are disordered. Zn(2+) is bound by residues C213, H238, and E242. Residues 270 to 274 (KMSKS) carry the 'KMSKS' region motif. K273 is a binding site for ATP.

It belongs to the class-I aminoacyl-tRNA synthetase family. In terms of assembly, monomer. It depends on Zn(2+) as a cofactor.

Its subcellular location is the cytoplasm. The enzyme catalyses tRNA(Cys) + L-cysteine + ATP = L-cysteinyl-tRNA(Cys) + AMP + diphosphate. The protein is Cysteine--tRNA ligase of Synechococcus sp. (strain CC9605).